Consider the following 182-residue polypeptide: UPF0301 protein CHU_1773 (182 aa).

The protein belongs to the UPF0301 (AlgH) family.

The polypeptide is UPF0301 protein CHU_1773 (Cytophaga hutchinsonii (strain ATCC 33406 / DSM 1761 / CIP 103989 / NBRC 15051 / NCIMB 9469 / D465)).